The following is a 138-amino-acid chain: Cysteine desulfuration protein SufE (138 aa).

C51 serves as the catalytic Cysteine persulfide intermediate.

The protein belongs to the SufE family. Homodimer. Interacts with SufS.

Its subcellular location is the cytoplasm. It participates in cofactor biosynthesis; iron-sulfur cluster biosynthesis. Functionally, participates in cysteine desulfuration mediated by SufS. Cysteine desulfuration mobilizes sulfur from L-cysteine to yield L-alanine and constitutes an essential step in sulfur metabolism for biosynthesis of a variety of sulfur-containing biomolecules. Functions as a sulfur acceptor for SufS, by mediating the direct transfer of the sulfur atom from the S-sulfanylcysteine of SufS, an intermediate product of cysteine desulfuration process. In Salmonella agona (strain SL483), this protein is Cysteine desulfuration protein SufE.